A 393-amino-acid chain; its full sequence is 2-nitroimidazole transporter (393 aa).

Residues 1 to 12 (MTCSTSLSGKNR) are Cytoplasmic-facing. A helical transmembrane segment spans residues 13-33 (IVLIAGILMIATTLRVTFTGA). At 34–52 (APLLDTIRSAYSLTTAQTG) the chain is on the periplasmic side. Residues 53-73 (LLTTLPLLAFALISPLAAPVA) traverse the membrane as a helical segment. At 74–80 (RRFGMER) the chain is on the cytoplasmic side. Helical transmembrane passes span 81–101 (SLFA…LPSP) and 102–122 (YLLF…NVLL). Residues 123–140 (PGLIKRDFPHSVARLTGA) are Cytoplasmic-facing. Residues 141 to 161 (YSLTMGAAAALGSAMVVPLAL) traverse the membrane as a helical segment. The Periplasmic portion of the chain corresponds to 162–163 (NG). A helical transmembrane segment spans residues 164–184 (FGWQGALLMLMCFPLLALFLW). At 185–218 (LPQWRSQQHANLSTSRALHTRGIWRSPLAWQVTL) the chain is on the cytoplasmic side. A helical membrane pass occupies residues 219-239 (FLGINSLVYYVIIGWLPAILI). Residues 240-249 (SHGYSEAQAG) lie on the Periplasmic side of the membrane. A helical membrane pass occupies residues 250–270 (SLHGLLQLATAAPGLLIPLFL). The Cytoplasmic segment spans residues 271–278 (HHVKDQRG). The helical transmembrane segment at 279 to 299 (IAAFVALMCAVGAVGLCFMPA) threads the bilayer. Over 300–304 (HAITW) the chain is Periplasmic. Residues 305-325 (TLLFGFGSGATMILGLTFIGL) form a helical membrane-spanning segment. Over 326–334 (RASSAHQAA) the chain is Cytoplasmic. A helical membrane pass occupies residues 335-355 (ALSGMAQSVGYLLAACGPPLM). Residues 356 to 366 (GKIHDANGNWS) are Periplasmic-facing. The helical transmembrane segment at 367 to 387 (VPLMGVAILSLLMAIFGLCAG) threads the bilayer. Over 388–393 (RDKEIR) the chain is Cytoplasmic.

The protein belongs to the major facilitator superfamily. Cyanate porter (TC 2.A.1.17) family.

The protein localises to the cell inner membrane. Its function is as follows. Involved in efflux of 2-nitroimidazole. In Escherichia coli (strain K12), this protein is 2-nitroimidazole transporter.